The sequence spans 499 residues: Glycerol kinase (499 aa).

An ADP-binding site is contributed by T13. T13, T14, and S15 together coordinate ATP. T13 contributes to the sn-glycerol 3-phosphate binding site. R17 lines the ADP pocket. 4 residues coordinate sn-glycerol 3-phosphate: R83, E84, Y135, and D244. 5 residues coordinate glycerol: R83, E84, Y135, D244, and Q245. ADP contacts are provided by T266 and G309. T266, G309, Q313, and G410 together coordinate ATP. Residues G410 and N414 each contribute to the ADP site.

It belongs to the FGGY kinase family. As to quaternary structure, homotetramer and homodimer (in equilibrium).

The catalysed reaction is glycerol + ATP = sn-glycerol 3-phosphate + ADP + H(+). The protein operates within polyol metabolism; glycerol degradation via glycerol kinase pathway; sn-glycerol 3-phosphate from glycerol: step 1/1. With respect to regulation, activated by phosphorylation and inhibited by fructose 1,6-bisphosphate (FBP). In terms of biological role, key enzyme in the regulation of glycerol uptake and metabolism. Catalyzes the phosphorylation of glycerol to yield sn-glycerol 3-phosphate. This chain is Glycerol kinase, found in Brevibacillus brevis (strain 47 / JCM 6285 / NBRC 100599).